We begin with the raw amino-acid sequence, 556 residues long: Cholesterol oxidase (556 aa).

Residues G18, E37, G88, A93, and V235 each contribute to the FAD site. H471 functions as the Proton acceptor in the catalytic mechanism. G504 is an FAD binding site.

The protein belongs to the GMC oxidoreductase family. It depends on FAD as a cofactor.

The enzyme catalyses cholesterol + O2 = cholest-5-en-3-one + H2O2. It catalyses the reaction cholest-5-en-3-one = cholest-4-en-3-one. The protein operates within steroid metabolism; cholesterol degradation. In terms of biological role, bifunctional enzyme that catalyzes the oxidation and isomerization of cholesterol to cholestenone (cholest-4-en-3-one), an initial step in the cholesterol degradation process. The protein is Cholesterol oxidase of Acinetobacter baumannii.